Reading from the N-terminus, the 28-residue chain is leu operon leader peptide (28 aa).

Its function is as follows. Involved in control of the biosynthesis of leucine. This chain is leu operon leader peptide (leuL), found in Salmonella typhi.